The primary structure comprises 264 residues: MAKISVSRLTKMKQDNQKITCMTAYDASFAAIFDQAGIQVLLVGDSLGMVLQGHDSTLPVTVDDIRYHTAAVVSTAKSAFIIADLPFMSYSTPEMSYENAAILMRAGANMVKMEGGEWLTDSVKGLVERGIPVCGHLGLTPQSVNIFGGYKVQGREEEQADELLNDALLLQEAGIQLLVLECVPVSLADRITTALKIPVIGIGAGCETDGQILVMHDAFGVSAGFCPKFSKNFLLETGDIRQAVTLYIDQVESRQFPSAEHSFY.

Asp-45 and Asp-84 together coordinate Mg(2+). Residues 45-46 (DS), Asp-84, and Lys-112 each bind 3-methyl-2-oxobutanoate. Mg(2+) is bound at residue Glu-114. The active-site Proton acceptor is the Glu-181.

The protein belongs to the PanB family. In terms of assembly, homodecamer; pentamer of dimers. Mg(2+) is required as a cofactor.

Its subcellular location is the cytoplasm. The enzyme catalyses 3-methyl-2-oxobutanoate + (6R)-5,10-methylene-5,6,7,8-tetrahydrofolate + H2O = 2-dehydropantoate + (6S)-5,6,7,8-tetrahydrofolate. Its pathway is cofactor biosynthesis; (R)-pantothenate biosynthesis; (R)-pantoate from 3-methyl-2-oxobutanoate: step 1/2. Its function is as follows. Catalyzes the reversible reaction in which hydroxymethyl group from 5,10-methylenetetrahydrofolate is transferred onto alpha-ketoisovalerate to form ketopantoate. This Psychromonas ingrahamii (strain DSM 17664 / CCUG 51855 / 37) protein is 3-methyl-2-oxobutanoate hydroxymethyltransferase.